Consider the following 54-residue polypeptide: Large ribosomal subunit protein bL33 (54 aa).

This sequence belongs to the bacterial ribosomal protein bL33 family.

This Roseiflexus castenholzii (strain DSM 13941 / HLO8) protein is Large ribosomal subunit protein bL33.